We begin with the raw amino-acid sequence, 629 residues long: Rho GTPase-activating protein conundrum (629 aa).

The interval 185–294 is required for interaction with Moe; sequence PPKSGTYADI…CRDSSSLDSC (110 aa). The interval 237-261 is disordered; sequence SIGRSKESRSENDARSQKKKSSEVL. Positions 240 to 258 are enriched in basic and acidic residues; that stretch reads RSKESRSENDARSQKKKSS. Residues 359-565 form the Rho-GAP domain; it reads VSINALIRRD…ILILRGEKLF (207 aa).

In terms of assembly, interacts with Moe (via FERM domain).

The protein resides in the cytoplasm. It localises to the cell membrane. It is found in the cell cortex. The protein localises to the cell junction. In terms of biological role, GTPase-activating protein (GAP) for Rho1; functions with the ERM protein Moe to regulate Rho1 and control proliferation in the developing epithelium. Recruited by Moe to the cell cortex where it negatively regulates Rho1 activity. Can also promote cell proliferation independently of its GAP activity, perhaps by acting with Arf6 to positively regulate Rac1. The polypeptide is Rho GTPase-activating protein conundrum (Drosophila melanogaster (Fruit fly)).